A 109-amino-acid polypeptide reads, in one-letter code: Nucleoid-associated protein Ldb1634 (109 aa).

Residues 18-40 are disordered; the sequence is MMKQAKKLQEQMAQEQENITTQE.

It belongs to the YbaB/EbfC family. In terms of assembly, homodimer.

It is found in the cytoplasm. The protein localises to the nucleoid. Binds to DNA and alters its conformation. May be involved in regulation of gene expression, nucleoid organization and DNA protection. The sequence is that of Nucleoid-associated protein Ldb1634 from Lactobacillus delbrueckii subsp. bulgaricus (strain ATCC 11842 / DSM 20081 / BCRC 10696 / JCM 1002 / NBRC 13953 / NCIMB 11778 / NCTC 12712 / WDCM 00102 / Lb 14).